The primary structure comprises 319 residues: Protease HtpX homolog (319 aa).

A run of 2 helical transmembrane segments spans residues 6–26 and 28–48; these read TAMLLAFMTVLFMAVGYVIGG and GGMMIALVIAAGMNFFSYWNS. His130 contacts Zn(2+). Glu131 is a catalytic residue. His134 lines the Zn(2+) pocket. Transmembrane regions (helical) follow at residues 145–165 and 172–192; these read MTATLAGAISMLGNFAFFFGG and PLGFIGVLIAMIVAPLAAALV. Glu201 lines the Zn(2+) pocket. The disordered stretch occupies residues 280 to 319; it reads EMSTGSTAPVRPDNAVRKSRSVPRTGWGRGGSEPPKGPWS.

Belongs to the peptidase M48B family. It depends on Zn(2+) as a cofactor.

It localises to the cell inner membrane. The chain is Protease HtpX homolog from Sinorhizobium medicae (strain WSM419) (Ensifer medicae).